The chain runs to 231 residues: NADH-ubiquinone oxidoreductase chain 4 (231 aa).

The next 6 helical transmembrane spans lie at 1–21 (PIAGSMVLAAILLKLGGYGII), 34–54 (LFLPFMVLALWGAILANLTCL), 63–85 (IAYSSISHMGLVVAAIIIQTPWG), 89–111 (AMALMIAHGFTSSALFCLANTTY), 118–138 (ILILTRGLHNILPMATTWWLL), and 156–176 (LLIMSALFNWCPTTIIMLGLS).

This sequence belongs to the complex I subunit 4 family.

It localises to the mitochondrion membrane. The enzyme catalyses a ubiquinone + NADH + 5 H(+)(in) = a ubiquinol + NAD(+) + 4 H(+)(out). Its function is as follows. Core subunit of the mitochondrial membrane respiratory chain NADH dehydrogenase (Complex I) that is believed to belong to the minimal assembly required for catalysis. Complex I functions in the transfer of electrons from NADH to the respiratory chain. The immediate electron acceptor for the enzyme is believed to be ubiquinone. This is NADH-ubiquinone oxidoreductase chain 4 (MT-ND4) from Ovophis okinavensis (Ryukyu Island pit viper).